We begin with the raw amino-acid sequence, 210 residues long: Urease accessory protein UreG (210 aa).

GTP is bound at residue 14-21 (GPVGSGKT).

It belongs to the SIMIBI class G3E GTPase family. UreG subfamily. In terms of assembly, homodimer. UreD, UreF and UreG form a complex that acts as a GTP-hydrolysis-dependent molecular chaperone, activating the urease apoprotein by helping to assemble the nickel containing metallocenter of UreC. The UreE protein probably delivers the nickel.

Its subcellular location is the cytoplasm. In terms of biological role, facilitates the functional incorporation of the urease nickel metallocenter. This process requires GTP hydrolysis, probably effectuated by UreG. This is Urease accessory protein UreG from Rhodopseudomonas palustris (strain BisA53).